Reading from the N-terminus, the 213-residue chain is Leucyl/phenylalanyl-tRNA--protein transferase (213 aa).

The protein belongs to the L/F-transferase family.

The protein resides in the cytoplasm. The catalysed reaction is N-terminal L-lysyl-[protein] + L-leucyl-tRNA(Leu) = N-terminal L-leucyl-L-lysyl-[protein] + tRNA(Leu) + H(+). The enzyme catalyses N-terminal L-arginyl-[protein] + L-leucyl-tRNA(Leu) = N-terminal L-leucyl-L-arginyl-[protein] + tRNA(Leu) + H(+). It catalyses the reaction L-phenylalanyl-tRNA(Phe) + an N-terminal L-alpha-aminoacyl-[protein] = an N-terminal L-phenylalanyl-L-alpha-aminoacyl-[protein] + tRNA(Phe). Functionally, functions in the N-end rule pathway of protein degradation where it conjugates Leu, Phe and, less efficiently, Met from aminoacyl-tRNAs to the N-termini of proteins containing an N-terminal arginine or lysine. This is Leucyl/phenylalanyl-tRNA--protein transferase from Rhodospirillum rubrum (strain ATCC 11170 / ATH 1.1.1 / DSM 467 / LMG 4362 / NCIMB 8255 / S1).